Here is a 757-residue protein sequence, read N- to C-terminus: Chloride channel protein C (757 aa).

Topologically, residues 1–96 are cytoplasmic; that stretch reads MGSSLNKPLS…LHLKKTFGKW (96 aa). The next 11 helical transmembrane spans lie at 97 to 117, 141 to 161, 196 to 216, 253 to 273, 292 to 312, 337 to 357, 378 to 398, 462 to 482, 484 to 504, 506 to 526, and 535 to 555; these read IICL…KMVV, FLTF…MVIV, IVSL…GPMI, FISI…IGGV, TFFT…GIGS, LLCF…FVFL, FEAL…SFIF, LLVF…LWVA, GLFV…GQTI, MWFT…AMMA, and IVVI…IILA. 2 CBS domains span residues 600–667 and 710–757; these read MSKN…TGEE and MNSS…NDLF.

This sequence belongs to the chloride channel (TC 2.A.49) family.

It is found in the membrane. Its function is as follows. Voltage-gated chloride channel. Chloride channels may have several functions including the regulation of cell volume, membrane potential stabilization and signal transduction. The protein is Chloride channel protein C (clcC) of Dictyostelium discoideum (Social amoeba).